We begin with the raw amino-acid sequence, 350 residues long: MSKNKLSKGQQRRVNANHQRRLKTSAEKADYDDNLFGEPAEGIVISRLGMHADVESADGEVHRCNIRRTIRSLVTGDRVVWRPGKAAAEGVNVKGIVEAVHERTSVLTRPDFYDGVKPIAANIDQIVIVSAILPELSLNIIDRYLVGCETLQVEPLIVLNKIDLLDDEGMDFVNEQMDIYRNIGYRVLMVSSHTQDGLKPLEEALTGRISIFAGQSGVGKSSLLNALLGLQNEILTNDVSNVSGLGQHTTTAARLYHFPHGGDVIDSPGVREFGLWHLEPEQITQGFVEFHDYLGHCKYRDCKHDADPGCAIREAVENGAIAETRFENYHRILESMAQVKTRKNFSDTDD.

Residues 1-17 (MSKNKLSKGQQRRVNAN) show a composition bias toward polar residues. The disordered stretch occupies residues 1–27 (MSKNKLSKGQQRRVNANHQRRLKTSAE). One can recognise a CP-type G domain in the interval 104 to 273 (TSVLTRPDFY…VIDSPGVREF (170 aa)). Residues 160 to 163 (NKID) and 214 to 222 (GQSGVGKSS) each bind GTP. Zn(2+) is bound by residues cysteine 297, cysteine 302, histidine 304, and cysteine 310.

The protein belongs to the TRAFAC class YlqF/YawG GTPase family. RsgA subfamily. Monomer. Associates with 30S ribosomal subunit, binds 16S rRNA. Zn(2+) serves as cofactor.

The protein resides in the cytoplasm. Its function is as follows. One of several proteins that assist in the late maturation steps of the functional core of the 30S ribosomal subunit. Helps release RbfA from mature subunits. May play a role in the assembly of ribosomal proteins into the subunit. Circularly permuted GTPase that catalyzes slow GTP hydrolysis, GTPase activity is stimulated by the 30S ribosomal subunit. The protein is Small ribosomal subunit biogenesis GTPase RsgA of Salmonella dublin (strain CT_02021853).